We begin with the raw amino-acid sequence, 447 residues long: ATP-dependent protease ATPase subunit HslU (447 aa).

ATP-binding positions include I17, 59–64, D256, E321, and R393; that span reads GVGKTE.

Belongs to the ClpX chaperone family. HslU subfamily. As to quaternary structure, a double ring-shaped homohexamer of HslV is capped on each side by a ring-shaped HslU homohexamer. The assembly of the HslU/HslV complex is dependent on binding of ATP.

It is found in the cytoplasm. In terms of biological role, ATPase subunit of a proteasome-like degradation complex; this subunit has chaperone activity. The binding of ATP and its subsequent hydrolysis by HslU are essential for unfolding of protein substrates subsequently hydrolyzed by HslV. HslU recognizes the N-terminal part of its protein substrates and unfolds these before they are guided to HslV for hydrolysis. The chain is ATP-dependent protease ATPase subunit HslU from Pseudomonas putida (strain ATCC 47054 / DSM 6125 / CFBP 8728 / NCIMB 11950 / KT2440).